The chain runs to 495 residues: Phosphomethylpyrimidine synthase (495 aa).

Residues N125, M154, Y183, H219, 239–241 (SRG), 280–283 (DGLR), and E319 contribute to the substrate site. Residue H323 coordinates Zn(2+). Y346 contributes to the substrate binding site. H387 is a binding site for Zn(2+). [4Fe-4S] cluster contacts are provided by C467, C470, and C475.

The protein belongs to the ThiC family. Requires [4Fe-4S] cluster as cofactor.

The catalysed reaction is 5-amino-1-(5-phospho-beta-D-ribosyl)imidazole + S-adenosyl-L-methionine = 4-amino-2-methyl-5-(phosphooxymethyl)pyrimidine + CO + 5'-deoxyadenosine + formate + L-methionine + 3 H(+). Its pathway is cofactor biosynthesis; thiamine diphosphate biosynthesis. Functionally, catalyzes the synthesis of the hydroxymethylpyrimidine phosphate (HMP-P) moiety of thiamine from aminoimidazole ribotide (AIR) in a radical S-adenosyl-L-methionine (SAM)-dependent reaction. The chain is Phosphomethylpyrimidine synthase from Leptospira interrogans serogroup Icterohaemorrhagiae serovar copenhageni (strain Fiocruz L1-130).